The chain runs to 358 residues: L-lysine 3-hydroxylase (358 aa).

Fe cation-binding residues include histidine 178, glutamate 180, and histidine 314. Residue arginine 328 coordinates 2-oxoglutarate.

The protein belongs to the clavaminate synthase family. The cofactor is Fe(2+).

It catalyses the reaction L-lysine + 2-oxoglutarate + O2 = (3S)-3-hydroxy-L-lysine + succinate + CO2. Alpha-ketoglutarate-dependent dioxygenase that in vitro catalyzes the regio- and stereoselective hydroxylation of L-lysine, leading to (3S)-3-hydroxy-L-lysine. Can also use (5R)-5-hydroxy-L-lysine as substrate, but neither D-lysine nor L-ornithine. The protein is L-lysine 3-hydroxylase of Catenulispora acidiphila (strain DSM 44928 / JCM 14897 / NBRC 102108 / NRRL B-24433 / ID139908).